The sequence spans 618 residues: DNA mismatch repair protein MutL (618 aa).

A compositionally biased stretch (low complexity) spans 366–381 (AEPTAAREPATPRYSG). A disordered region spans residues 366–405 (AEPTAAREPATPRYSGGTSGGNGGRQSAGGWPHAQPGYQK). Residues 382-392 (GTSGGNGGRQS) are compositionally biased toward gly residues.

This sequence belongs to the DNA mismatch repair MutL/HexB family.

Its function is as follows. This protein is involved in the repair of mismatches in DNA. It is required for dam-dependent methyl-directed DNA mismatch repair. May act as a 'molecular matchmaker', a protein that promotes the formation of a stable complex between two or more DNA-binding proteins in an ATP-dependent manner without itself being part of a final effector complex. The polypeptide is DNA mismatch repair protein MutL (Salmonella agona (strain SL483)).